The primary structure comprises 476 residues: Bifunctional protein HldE (476 aa).

Residues 1–318 (MAQYSAEFKQ…ENAIHARPET (318 aa)) form a ribokinase region. 195 to 198 (NMSE) is a binding site for ATP. The active site involves D264. Residues 344-476 (MTNGCFDILH…VIEKIKLLKD (133 aa)) are cytidylyltransferase.

This sequence in the N-terminal section; belongs to the carbohydrate kinase PfkB family. The protein in the C-terminal section; belongs to the cytidylyltransferase family. Homodimer.

It carries out the reaction D-glycero-beta-D-manno-heptose 7-phosphate + ATP = D-glycero-beta-D-manno-heptose 1,7-bisphosphate + ADP + H(+). The catalysed reaction is D-glycero-beta-D-manno-heptose 1-phosphate + ATP + H(+) = ADP-D-glycero-beta-D-manno-heptose + diphosphate. It functions in the pathway nucleotide-sugar biosynthesis; ADP-L-glycero-beta-D-manno-heptose biosynthesis; ADP-L-glycero-beta-D-manno-heptose from D-glycero-beta-D-manno-heptose 7-phosphate: step 1/4. The protein operates within nucleotide-sugar biosynthesis; ADP-L-glycero-beta-D-manno-heptose biosynthesis; ADP-L-glycero-beta-D-manno-heptose from D-glycero-beta-D-manno-heptose 7-phosphate: step 3/4. In terms of biological role, catalyzes the phosphorylation of D-glycero-D-manno-heptose 7-phosphate at the C-1 position to selectively form D-glycero-beta-D-manno-heptose-1,7-bisphosphate. Catalyzes the ADP transfer from ATP to D-glycero-beta-D-manno-heptose 1-phosphate, yielding ADP-D-glycero-beta-D-manno-heptose. The protein is Bifunctional protein HldE of Haemophilus influenzae (strain PittGG).